The primary structure comprises 358 residues: Isopentenyl-diphosphate delta-isomerase (358 aa).

Arg12–Lys13 lines the substrate pocket. Residues Ala69–Thr71, Ser99, and Asn128 contribute to the FMN site. Gln158 contributes to the substrate binding site. Position 159 (Glu159) interacts with Mg(2+). Residues Lys190, Thr220, Gly267–Arg269, and Ala288–Gly289 contribute to the FMN site.

This sequence belongs to the IPP isomerase type 2 family. As to quaternary structure, homooctamer. Dimer of tetramers. It depends on FMN as a cofactor. NADPH is required as a cofactor. Requires Mg(2+) as cofactor.

The protein localises to the cytoplasm. It catalyses the reaction isopentenyl diphosphate = dimethylallyl diphosphate. Involved in the biosynthesis of isoprenoids. Catalyzes the 1,3-allylic rearrangement of the homoallylic substrate isopentenyl (IPP) to its allylic isomer, dimethylallyl diphosphate (DMAPP). The chain is Isopentenyl-diphosphate delta-isomerase from Listeria welshimeri serovar 6b (strain ATCC 35897 / DSM 20650 / CCUG 15529 / CIP 8149 / NCTC 11857 / SLCC 5334 / V8).